Consider the following 273-residue polypeptide: Dermonecrotic toxin LdSicTox-alphaIB3aii (273 aa).

The active site involves histidine 5. The Mg(2+) site is built by glutamate 25 and aspartate 27. The active-site Nucleophile is histidine 41. Cystine bridges form between cysteine 45/cysteine 51 and cysteine 47/cysteine 190. Aspartate 85 contacts Mg(2+).

Belongs to the arthropod phospholipase D family. Class II subfamily. Mg(2+) serves as cofactor. In terms of tissue distribution, expressed by the venom gland.

The protein resides in the secreted. It catalyses the reaction an N-(acyl)-sphingosylphosphocholine = an N-(acyl)-sphingosyl-1,3-cyclic phosphate + choline. It carries out the reaction an N-(acyl)-sphingosylphosphoethanolamine = an N-(acyl)-sphingosyl-1,3-cyclic phosphate + ethanolamine. The enzyme catalyses a 1-acyl-sn-glycero-3-phosphocholine = a 1-acyl-sn-glycero-2,3-cyclic phosphate + choline. The catalysed reaction is a 1-acyl-sn-glycero-3-phosphoethanolamine = a 1-acyl-sn-glycero-2,3-cyclic phosphate + ethanolamine. Its function is as follows. Dermonecrotic toxins cleave the phosphodiester linkage between the phosphate and headgroup of certain phospholipids (sphingolipid and lysolipid substrates), forming an alcohol (often choline) and a cyclic phosphate. This toxin acts on sphingomyelin (SM). It may also act on ceramide phosphoethanolamine (CPE), lysophosphatidylcholine (LPC) and lysophosphatidylethanolamine (LPE), but not on lysophosphatidylserine (LPS), and lysophosphatidylglycerol (LPG). It acts by transphosphatidylation, releasing exclusively cyclic phosphate products as second products. Induces dermonecrosis, hemolysis, increased vascular permeability, edema, inflammatory response, and platelet aggregation. This Loxosceles deserta (Desert recluse spider) protein is Dermonecrotic toxin LdSicTox-alphaIB3aii.